The sequence spans 193 residues: MTMRHCWTAGPSSWWVLLLYVHVILARATSAPQTTATVLTGSSKDPCSSWSPAVPTKQYPALDVIWPEKEVPLNGTLTLSCTACSRFPYFSILYWLGNGSFIEHLPGRLKEGHTSREHRNTSTWLHRALVLEELSPTLRSTNFSCLFVDPGQVAQYHIILAQLWDGLKTAPSPSQETLSSHSPVSRSAGPGVA.

The signal sequence occupies residues 1–28 (MTMRHCWTAGPSSWWVLLLYVHVILARA). The 102-residue stretch at 60 to 161 (PALDVIWPEK…QVAQYHIILA (102 aa)) folds into the Ig-like C2-type domain. Residues Asn-74, Asn-98, Asn-120, and Asn-142 are each glycosylated (N-linked (GlcNAc...) asparagine). Cys-81 and Cys-145 are oxidised to a cystine. Polar residues predominate over residues 172–185 (SPSQETLSSHSPVS). Residues 172 to 193 (SPSQETLSSHSPVSRSAGPGVA) form a disordered region.

The protein resides in the secreted. Binds to IL-18 and inhibits its activity. Functions as an inhibitor of the early TH1 cytokine response. This Mus musculus (Mouse) protein is Interleukin-18-binding protein (Il18bp).